The primary structure comprises 274 residues: uncharacterized protein (274 aa).

The signal sequence occupies residues 1-30; that stretch reads MTIDTPAREDQTLAATHRAMWALGDYALMA.

The protein to M.tuberculosis Rv1403c.

This is an uncharacterized protein from Mycobacterium bovis (strain ATCC BAA-935 / AF2122/97).